Reading from the N-terminus, the 191-residue chain is Protein Ves (191 aa).

Belongs to the Ves family.

This is Protein Ves from Shigella flexneri serotype 5b (strain 8401).